Consider the following 20-residue polypeptide: DLVFYCPKCTAERQTACPKL.

Positions 2–20 constitute an IGFBP N-terminal domain; that stretch reads LVFYCPKCTAERQTACPKL.

As to quaternary structure, binds IGF2 more than IGF1. Post-translationally, N-glycosylated.

It is found in the secreted. In terms of biological role, inhibits IGF-mediated growth and developmental rates. IGF-binding proteins prolong the half-life of the IGFs and have been shown to either inhibit or stimulate the growth promoting effects of the IGFs on cell culture. They alter the interaction of IGFs with their cell surface receptors. This is Insulin-like growth factor-binding protein 2 (igfbp2) from Oncorhynchus tshawytscha (Chinook salmon).